A 730-amino-acid polypeptide reads, in one-letter code: Elongation factor 2 (730 aa).

In terms of domain architecture, tr-type G spans 19-228; it reads QRIRNIGIVA…TGVSFKDVYD (210 aa). Residues 28 to 35, 94 to 98, and 148 to 151 contribute to the GTP site; these read AHIDHGKT, DTPGH, and NKVD. At histidine 596 the chain carries Diphthamide.

The protein belongs to the TRAFAC class translation factor GTPase superfamily. Classic translation factor GTPase family. EF-G/EF-2 subfamily.

It localises to the cytoplasm. Catalyzes the GTP-dependent ribosomal translocation step during translation elongation. During this step, the ribosome changes from the pre-translocational (PRE) to the post-translocational (POST) state as the newly formed A-site-bound peptidyl-tRNA and P-site-bound deacylated tRNA move to the P and E sites, respectively. Catalyzes the coordinated movement of the two tRNA molecules, the mRNA and conformational changes in the ribosome. This Methanosarcina acetivorans (strain ATCC 35395 / DSM 2834 / JCM 12185 / C2A) protein is Elongation factor 2.